The chain runs to 323 residues: Sphingolipid delta(4)-desaturase DES1 (323 aa).

G2 carries the N-myristoyl glycine lipid modification. Transmembrane regions (helical) follow at residues 41–61 (PNLI…FYLV) and 68–88 (WLMF…TLAI). The short motif at 89-93 (HEISH) is the Histidine box-1 element. The chain crosses the membrane as a helical span at residues 104-124 (WNRWFGMFANLSLGVPYSISF). The Histidine box-2 motif lies at 128 to 132 (HMDHH). Transmembrane regions (helical) follow at residues 152–172 (FFCT…FYAF), 184–204 (HLEV…YYVF), and 210–230 (VYML…GHFI). The Histidine box-3 motif lies at 259–263 (HNEHH). S307 carries the phosphoserine modification.

Belongs to the fatty acid desaturase type 1 family. DEGS subfamily. Interacts with RLBP1; the interaction increases synthesis of chromophore-precursors by DEGS1. In terms of processing, myristoylation can target the enzyme to the mitochondria leading to an increase in ceramide levels.

The protein resides in the mitochondrion membrane. It is found in the endoplasmic reticulum membrane. The enzyme catalyses an N-acylsphinganine + 2 Fe(II)-[cytochrome b5] + O2 + 2 H(+) = an N-acylsphing-4-enine + 2 Fe(III)-[cytochrome b5] + 2 H2O. The catalysed reaction is all-trans-retinol = 11-cis-retinol. It carries out the reaction all-trans-retinol = 9-cis-retinol. It catalyses the reaction all-trans-retinol = 13-cis-retinol. The enzyme catalyses 11-cis-retinol = 13-cis-retinol. The catalysed reaction is 11-cis-retinol = 9-cis-retinol. Its function is as follows. Has sphingolipid-delta-4-desaturase activity. Converts D-erythro-sphinganine to D-erythro-sphingosine (E-sphing-4-enine). Catalyzes the equilibrium isomerization of retinols. This Rattus norvegicus (Rat) protein is Sphingolipid delta(4)-desaturase DES1.